A 262-amino-acid polypeptide reads, in one-letter code: Adenosylcobinamide-GDP ribazoletransferase (262 aa).

The next 6 membrane-spanning stretches (helical) occupy residues 43 to 63 (YFGLVGLLVGLLSAIVFWLTQ), 66 to 86 (LPAGVSVLLAMLVGVLLTGGF), 120 to 140 (GALALMLALLLKWQLLVELAL), 146 to 166 (AGSALIVAHTVSRMVSASIIF), 191 to 211 (LLILIASGVLVLLFLKGLAAL), and 242 to 262 (AAQQIAEIVCYFVLLVVGNIL).

This sequence belongs to the CobS family. It depends on Mg(2+) as a cofactor.

Its subcellular location is the cell inner membrane. The catalysed reaction is alpha-ribazole + adenosylcob(III)inamide-GDP = adenosylcob(III)alamin + GMP + H(+). It catalyses the reaction alpha-ribazole 5'-phosphate + adenosylcob(III)inamide-GDP = adenosylcob(III)alamin 5'-phosphate + GMP + H(+). It functions in the pathway cofactor biosynthesis; adenosylcobalamin biosynthesis; adenosylcobalamin from cob(II)yrinate a,c-diamide: step 7/7. Functionally, joins adenosylcobinamide-GDP and alpha-ribazole to generate adenosylcobalamin (Ado-cobalamin). Also synthesizes adenosylcobalamin 5'-phosphate from adenosylcobinamide-GDP and alpha-ribazole 5'-phosphate. The sequence is that of Adenosylcobinamide-GDP ribazoletransferase from Shewanella baltica (strain OS155 / ATCC BAA-1091).